We begin with the raw amino-acid sequence, 202 residues long: Snake venom metalloproteinase Ac1 (202 aa).

The Peptidase M12B domain occupies 6–202; sequence RYMEIVIVVD…ENPPCILNKP (197 aa). Residues glutamate 9 and aspartate 93 each contribute to the Ca(2+) site. 2 disulfide bridges follow: cysteine 117–cysteine 197 and cysteine 157–cysteine 181. Residue histidine 142 participates in Zn(2+) binding. Glutamate 143 is a catalytic residue. 2 residues coordinate Zn(2+): histidine 146 and histidine 152. Cysteine 197 and asparagine 200 together coordinate Ca(2+).

It belongs to the venom metalloproteinase (M12B) family. P-I subfamily. As to quaternary structure, monomer. The cofactor is Zn(2+). In terms of tissue distribution, expressed by the venom gland.

It is found in the secreted. Its function is as follows. Snake venom metalloproteinase that impairs hemostasis in the envenomed animal. The polypeptide is Snake venom metalloproteinase Ac1 (Deinagkistrodon acutus (Hundred-pace snake)).